A 300-amino-acid polypeptide reads, in one-letter code: Bifunctional protein FolD (300 aa).

NADP(+) is bound by residues 169–171, S196, and I237; that span reads GRG.

It belongs to the tetrahydrofolate dehydrogenase/cyclohydrolase family. In terms of assembly, homodimer.

The catalysed reaction is (6R)-5,10-methylene-5,6,7,8-tetrahydrofolate + NADP(+) = (6R)-5,10-methenyltetrahydrofolate + NADPH. It catalyses the reaction (6R)-5,10-methenyltetrahydrofolate + H2O = (6R)-10-formyltetrahydrofolate + H(+). It participates in one-carbon metabolism; tetrahydrofolate interconversion. In terms of biological role, catalyzes the oxidation of 5,10-methylenetetrahydrofolate to 5,10-methenyltetrahydrofolate and then the hydrolysis of 5,10-methenyltetrahydrofolate to 10-formyltetrahydrofolate. The protein is Bifunctional protein FolD of Clavibacter michiganensis subsp. michiganensis (strain NCPPB 382).